We begin with the raw amino-acid sequence, 28 residues long: NGLCCSQYGFCGTTSAYCSRANGCQSNC.

Residues 1–28 form the Chitin-binding type-1 domain; it reads NGLCCSQYGFCGTTSAYCSRANGCQSNC. 2 cysteine pairs are disulfide-bonded: cysteine 4/cysteine 18 and cysteine 24/cysteine 28.

As to expression, seeds (at protein level).

Functionally, chitin-binding protein which functions in defense against chitin-containing fungal pathogens. The chain is Morintide mO6 from Moringa oleifera (Horseradish tree).